The chain runs to 120 residues: Fumarate reductase subunit D (120 aa).

3 consecutive transmembrane segments (helical) span residues 25 to 45 (FAMLTPVTILVLGILVPLGVI), 55 to 75 (VAGFVTSIIGALFVIGSISMP), and 100 to 120 (IACYATAALATVLSIVFIFMI).

Belongs to the FrdD family. Part of an enzyme complex containing four subunits: a flavoprotein (FrdA), an iron-sulfur protein (FrdB), and two hydrophobic anchor proteins (FrdC and FrdD).

Its subcellular location is the cell inner membrane. In terms of biological role, anchors the catalytic components of the fumarate reductase complex to the cell membrane, binds quinones. The sequence is that of Fumarate reductase subunit D from Aliivibrio salmonicida (strain LFI1238) (Vibrio salmonicida (strain LFI1238)).